The following is an 86-amino-acid chain: MATLLTTDDLRRALVECAGETDGTDLSGDFLDLRFEDIGYDSLALMETAARLESRYGVSIPDDVAGRVDTPRELLDLINGALAEAA.

Positions 4–82 (LLTTDDLRRA…ELLDLINGAL (79 aa)) constitute a Carrier domain. The residue at position 42 (S42) is an O-(pantetheine 4'-phosphoryl)serine.

4'-phosphopantetheine is transferred from CoA to a specific serine of the apo-ACP-like protein.

Its pathway is antibiotic biosynthesis; actinorhodin biosynthesis. Acyl carrier protein. The chain is Actinorhodin polyketide synthase acyl carrier protein from Streptomyces coelicolor (strain ATCC BAA-471 / A3(2) / M145).